Reading from the N-terminus, the 466-residue chain is Asparagine--tRNA ligase (466 aa).

It belongs to the class-II aminoacyl-tRNA synthetase family. In terms of assembly, homodimer.

It localises to the cytoplasm. The catalysed reaction is tRNA(Asn) + L-asparagine + ATP = L-asparaginyl-tRNA(Asn) + AMP + diphosphate + H(+). This chain is Asparagine--tRNA ligase, found in Shewanella oneidensis (strain ATCC 700550 / JCM 31522 / CIP 106686 / LMG 19005 / NCIMB 14063 / MR-1).